Here is a 487-residue protein sequence, read N- to C-terminus: Protein nucleotidyltransferase YdiU (487 aa).

Residues glycine 91, glycine 93, arginine 94, lysine 114, aspartate 126, glycine 127, arginine 177, and arginine 184 each coordinate ATP. Aspartate 253 serves as the catalytic Proton acceptor. Asparagine 254 and aspartate 263 together coordinate Mg(2+). Aspartate 263 lines the ATP pocket.

Belongs to the SELO family. Mg(2+) serves as cofactor. Mn(2+) is required as a cofactor.

The enzyme catalyses L-seryl-[protein] + ATP = 3-O-(5'-adenylyl)-L-seryl-[protein] + diphosphate. The catalysed reaction is L-threonyl-[protein] + ATP = 3-O-(5'-adenylyl)-L-threonyl-[protein] + diphosphate. It catalyses the reaction L-tyrosyl-[protein] + ATP = O-(5'-adenylyl)-L-tyrosyl-[protein] + diphosphate. It carries out the reaction L-histidyl-[protein] + UTP = N(tele)-(5'-uridylyl)-L-histidyl-[protein] + diphosphate. The enzyme catalyses L-seryl-[protein] + UTP = O-(5'-uridylyl)-L-seryl-[protein] + diphosphate. The catalysed reaction is L-tyrosyl-[protein] + UTP = O-(5'-uridylyl)-L-tyrosyl-[protein] + diphosphate. Functionally, nucleotidyltransferase involved in the post-translational modification of proteins. It can catalyze the addition of adenosine monophosphate (AMP) or uridine monophosphate (UMP) to a protein, resulting in modifications known as AMPylation and UMPylation. This Yersinia pestis (strain Pestoides F) protein is Protein nucleotidyltransferase YdiU.